The following is a 477-amino-acid chain: FAD-dependent monooxygenase paxM (477 aa).

A helical membrane pass occupies residues 4-24; the sequence is AEFQVIIVGGSIGGLTLAHCL. FAD is bound by residues glutamate 35, glycine 49, and arginine 108. The active site involves arginine 195. 2 residues coordinate FAD: aspartate 308 and alanine 321. Residues 446–466 form a helical membrane-spanning segment; sequence LMIYLFGLTIVYTSLTMMFDL.

It belongs to the paxM FAD-dependent monooxygenase family. FAD is required as a cofactor.

Its subcellular location is the membrane. It functions in the pathway secondary metabolite biosynthesis. Its function is as follows. FAD-dependent monooxygenase; part of the gene cluster that mediates the biosynthesis of paxilline, a mycotoxin that acts as an inhibitor of mammalian maxi-K channels. PaxG, the geranylgeranyl diphosphate (GGPP) synthase is proposed to catalyze the first step in paxilline biosynthesis. Condensation of indole-3-glycerol phosphate with GGPP by paxC then forms 3-geranylgeranylindole (3-GGI), followed by epoxidation and cyclization of this intermediate (by paxM and paxB) to form paspaline. Paspaline is subsequently converted to 13-desoxypaxilline by paxP, the latter being then converted to paxilline by paxQ. Finally paxilline can be mono- and di-prenylated by paxD. This is FAD-dependent monooxygenase paxM from Penicillium paxilli.